Consider the following 603-residue polypeptide: Phosphoenolpyruvate carboxykinase [GTP] (603 aa).

Substrate is bound by residues arginine 87 and 209-211; that span reads YAG. Lysine 218 and histidine 237 together coordinate Mn(2+). Serine 258 contacts substrate. A GTP-binding site is contributed by 259–264; sequence GSGKTS. The active site involves serine 260. Position 275 (aspartate 275) interacts with Mn(2+). Residue 365 to 367 coordinates substrate; sequence NAR. Residues arginine 367 and arginine 398 each coordinate GTP.

The protein belongs to the phosphoenolpyruvate carboxykinase [GTP] family. Mn(2+) serves as cofactor.

The protein localises to the cytoplasm. It carries out the reaction oxaloacetate + GTP = phosphoenolpyruvate + GDP + CO2. The protein operates within carbohydrate biosynthesis; gluconeogenesis. Its function is as follows. Catalyzes the conversion of oxaloacetate (OAA) to phosphoenolpyruvate (PEP), the rate-limiting step in the metabolic pathway that produces glucose from lactate and other precursors derived from the citric acid cycle. This is Phosphoenolpyruvate carboxykinase [GTP] from Saccharolobus solfataricus (strain ATCC 35092 / DSM 1617 / JCM 11322 / P2) (Sulfolobus solfataricus).